Reading from the N-terminus, the 111-residue chain is Disintegrin subunit alpha (111 aa).

An N-terminal signal peptide occupies residues 1–20 (MIQVLLVTICLAVFPYQGSS). A propeptide spanning residues 21–44 (IILESGNVNDYEVVYPRKITPLPK) is cleaved from the precursor. Residues 45 to 111 (GAVQPKNPCC…GDCPRKHFYA (67 aa)) form the Disintegrin domain. Disulfide bonds link cysteine 53–cysteine 76, cysteine 67–cysteine 73, cysteine 72–cysteine 97, and cysteine 85–cysteine 104. The Cell attachment site motif lies at 89–91 (RGD). A propeptide spanning residues 110-111 (YA) is cleaved from the precursor.

The protein belongs to the disintegrin family. Dimeric disintegrin subfamily. In terms of assembly, heterodimer with subunit beta; disulfide-linked. Expressed by the venom gland.

The protein localises to the secreted. Functionally, acts by binding to alpha-IIb/beta-3 (ITGA2B/ITGB3) on the platelet surface and inhibits both ADP-induced platelet aggregation and platelet aggregate dissociation in human platelet-rich plasma. The polypeptide is Disintegrin subunit alpha (Agkistrodon piscivorus leucostoma (Western cottonmouth)).